Reading from the N-terminus, the 388-residue chain is Glutamate 5-kinase (388 aa).

Residue lysine 21 participates in ATP binding. Serine 61, aspartate 148, and asparagine 160 together coordinate substrate. ATP-binding positions include 180–181 (TD) and 222–228 (TGGMITK). Residues 285–363 (RGSVFLDPGA…RWLARELGAE (79 aa)) form the PUA domain.

It belongs to the glutamate 5-kinase family.

It localises to the cytoplasm. The catalysed reaction is L-glutamate + ATP = L-glutamyl 5-phosphate + ADP. Its pathway is amino-acid biosynthesis; L-proline biosynthesis; L-glutamate 5-semialdehyde from L-glutamate: step 1/2. Catalyzes the transfer of a phosphate group to glutamate to form L-glutamate 5-phosphate. The protein is Glutamate 5-kinase of Thermobifida fusca (strain YX).